Reading from the N-terminus, the 253-residue chain is Imidazole glycerol phosphate synthase subunit HisF (253 aa).

Residues D11 and D130 contribute to the active site.

Belongs to the HisA/HisF family. Heterodimer of HisH and HisF.

The protein localises to the cytoplasm. The catalysed reaction is 5-[(5-phospho-1-deoxy-D-ribulos-1-ylimino)methylamino]-1-(5-phospho-beta-D-ribosyl)imidazole-4-carboxamide + L-glutamine = D-erythro-1-(imidazol-4-yl)glycerol 3-phosphate + 5-amino-1-(5-phospho-beta-D-ribosyl)imidazole-4-carboxamide + L-glutamate + H(+). It participates in amino-acid biosynthesis; L-histidine biosynthesis; L-histidine from 5-phospho-alpha-D-ribose 1-diphosphate: step 5/9. Its function is as follows. IGPS catalyzes the conversion of PRFAR and glutamine to IGP, AICAR and glutamate. The HisF subunit catalyzes the cyclization activity that produces IGP and AICAR from PRFAR using the ammonia provided by the HisH subunit. This chain is Imidazole glycerol phosphate synthase subunit HisF, found in Cereibacter sphaeroides (strain ATCC 17025 / ATH 2.4.3) (Rhodobacter sphaeroides).